Reading from the N-terminus, the 661-residue chain is Cyclic di-GMP phosphodiesterase PdeR (661 aa).

Positions 109-179 (GLSFAEQVVS…RRNNRVFFRS (71 aa)) constitute a PAS domain. The GGDEF domain occupies 265–397 (NKVGVVYLDL…GRGQFCVFTP (133 aa)). One can recognise an EAL domain in the interval 406–658 (YLWLDTNLRK…AFERWYKRYL (253 aa)).

Interacts with DgcM and MlrA.

It carries out the reaction 3',3'-c-di-GMP + H2O = 5'-phosphoguanylyl(3'-&gt;5')guanosine + H(+). Part of a signaling cascade that regulates curli biosynthesis. The cascade is composed of two cyclic-di-GMP (c-di-GMP) control modules, in which c-di-GMP controlled by the DgcE/PdeH pair (module I) regulates the activity of the DgcM/PdeR pair (module II), which in turn regulates activity of the transcription factor MlrA and expression of the master biofilm regulator csgD. PdeR acts as a trigger enzyme that connects modules I and II. It inhibits DgcM and MlrA by direct interaction. Inhibition is relieved when PdeR binds and degrades c-di-GMP generated by module I. The sequence is that of Cyclic di-GMP phosphodiesterase PdeR from Escherichia coli (strain K12).